Consider the following 587-residue polypeptide: Sulfite reductase [NADPH] hemoprotein beta-component (587 aa).

Over residues 1-13 the composition is skewed to polar residues; that stretch reads MQSTDNDLSQSPP. Residues 1–20 are disordered; the sequence is MQSTDNDLSQSPPKLSADEQ. The [4Fe-4S] cluster site is built by Cys-439, Cys-445, Cys-484, and Cys-488. Cys-488 contributes to the siroheme binding site.

The protein belongs to the nitrite and sulfite reductase 4Fe-4S domain family. In terms of assembly, alpha(8)-beta(8). The alpha component is a flavoprotein, the beta component is a hemoprotein. Siroheme is required as a cofactor. Requires [4Fe-4S] cluster as cofactor.

The enzyme catalyses hydrogen sulfide + 3 NADP(+) + 3 H2O = sulfite + 3 NADPH + 4 H(+). The protein operates within sulfur metabolism; hydrogen sulfide biosynthesis; hydrogen sulfide from sulfite (NADPH route): step 1/1. In terms of biological role, component of the sulfite reductase complex that catalyzes the 6-electron reduction of sulfite to sulfide. This is one of several activities required for the biosynthesis of L-cysteine from sulfate. The chain is Sulfite reductase [NADPH] hemoprotein beta-component from Bordetella petrii (strain ATCC BAA-461 / DSM 12804 / CCUG 43448).